Here is a 416-residue protein sequence, read N- to C-terminus: MMNVPSAAAASSCDDFGYNATPPPPPSLLPIMDQDGGGGSIQRDHHQHHNHQQLGYNLEPSSLALLPPSNAAAAAAHHATIAHASPHDLLQFYPTSHYLAAAGGAGGGGNPYSHFTAAAAAGSTFQSYYQQPPQDAPEYYFPTLVSSAEENMASFAATQLGLNLGYRTYFPPRGGYTYGHHPPRCQAEGCKADLSSAKRYHRRHKVCEHHSKAPVVVTAGGLHQRFCQQCSRFHLLDEFDDAKKSCRKRLADHNRRRRKSKPSDGEHSGEKRRAQANKSAATKDKAGSSSKNAGIGDGFETQLLGGAHMSKDQDQAMDLGEVVKEAVDPKGKASMQQQQQQAHHGIHQQSHQQHGFPFPSSSGSCLFPQSQGAVSSTDTSNIAQVQEPSLAFHQQHHQHSNILQLGQAMFDLDFDH.

Positions 11-51 (SSCDDFGYNATPPPPPSLLPIMDQDGGGGSIQRDHHQHHNH) are disordered. The SBP-type zinc finger occupies 182–260 (PPRCQAEGCK…ADHNRRRRKS (79 aa)). Residues Cys185, Cys190, Cys207, His210, Cys227, Cys230, His234, and Cys246 each contribute to the Zn(2+) site. Residues 243-259 (KKSCRKRLADHNRRRRK) carry the Bipartite nuclear localization signal motif. The interval 250-299 (LADHNRRRRKSKPSDGEHSGEKRRAQANKSAATKDKAGSSSKNAGIGDGF) is disordered. Over residues 261–273 (KPSDGEHSGEKRR) the composition is skewed to basic and acidic residues.

Expressed in stems, leaf sheaths, and young panicles. Weakly expressed in ligules, auricles, and leaf sheaths at the basal region.

It localises to the nucleus. Probable transcription factor that plays an important role in building the laminar joint between leaf blade and leaf sheath boundary, thereby controlling ligule and auricle development. This Oryza sativa subsp. japonica (Rice) protein is Squamosa promoter-binding-like protein 8 (SPL8).